A 305-amino-acid polypeptide reads, in one-letter code: Olfactory receptor 9G9 (305 aa).

Over 1–27 (MQRSNHTVTEFILLGFTTDPGMQLGLF) the chain is Extracellular. The N-linked (GlcNAc...) asparagine glycan is linked to Asn5. Residues 28–48 (VVFLGVYSLTVVGNSTLIVLI) form a helical membrane-spanning segment. At 49–64 (CNDSHLHTPMYFVVGN) the chain is on the cytoplasmic side. The chain crosses the membrane as a helical span at residues 65 to 85 (LSFLDLWYSSVYTPKILVICI). At 86 to 96 (SEDKSISFAGC) the chain is on the extracellular side. A disulfide bridge links Cys96 with Cys178. The helical transmembrane segment at 97-117 (LCQFFFSAGLAYSECCLLAAM) threads the bilayer. Residues 118–138 (AYDRYVAISKPLLYAQAMSIK) lie on the Cytoplasmic side of the membrane. A helical transmembrane segment spans residues 139-159 (LCALLVAVSYCGGFINSSIIT). The Extracellular segment spans residues 160 to 200 (KKTFSFNFCCENIIDDFFCDLLPLVKLACGEKGCYKFLMYF). The chain crosses the membrane as a helical span at residues 201 to 221 (LLASNVICPAVLILASYLFII). Topologically, residues 222–239 (TSVLRISSSQGRLKAFST) are cytoplasmic. Residues 240-260 (CSSHLTSVTLYYGSILYIYAL) traverse the membrane as a helical segment. Residues 261–271 (PRSSYSFDMDK) lie on the Extracellular side of the membrane. The chain crosses the membrane as a helical span at residues 272 to 291 (IVSTFYTEVLPMLNPMIYSL). Over 292-305 (RNKDVKEALKKLLP) the chain is Cytoplasmic.

Belongs to the G-protein coupled receptor 1 family.

Its subcellular location is the cell membrane. In terms of biological role, odorant receptor. The chain is Olfactory receptor 9G9 (OR9G9) from Homo sapiens (Human).